An 88-amino-acid polypeptide reads, in one-letter code: MNPELQSAIGQGAALKHAETVDKSAPQIENVTVKKVDRSSFLEEVAKPHELKHAETVDKSGPAIPEDVHVKKVDRGAFLSEIEKAAKQ.

An N-acetylmethionine modification is found at Met1. The tract at residues 1–22 (MNPELQSAIGQGAALKHAETVD) is disordered. Lys35 carries the post-translational modification N6,N6,N6-trimethyllysine. The 18-residue stretch at 37–54 (DRSSFLEEVAKPHELKHA) folds into the WH2 domain. An N6,N6,N6-trimethyllysine modification is found at Lys72.

In terms of assembly, monomer.

Functionally, is able to bind two actin monomers at high concentrations of G-actin. The polypeptide is Actobindin (Acanthamoeba castellanii (Amoeba)).